The following is a 505-amino-acid chain: Lysine--tRNA ligase (505 aa).

Residues glutamate 415 and glutamate 422 each contribute to the Mg(2+) site.

It belongs to the class-II aminoacyl-tRNA synthetase family. Homodimer. The cofactor is Mg(2+).

Its subcellular location is the cytoplasm. It catalyses the reaction tRNA(Lys) + L-lysine + ATP = L-lysyl-tRNA(Lys) + AMP + diphosphate. The sequence is that of Lysine--tRNA ligase from Shigella dysenteriae serotype 1 (strain Sd197).